Here is a 506-residue protein sequence, read N- to C-terminus: MLSLLSTPRLVPVIARLRGLSGCMSCLQRRYSLQPVPVKEIPNRYLGQPSPVTHPHLLRPGEVTPGLSQVEYALRRHKLMALVHKEAQGHSGTDHTVVVLSNPIHYMSNDIPYTFHQDNSFLYLCGFQEPDSILVLQSCSGKQLPSHKAMLFVPRRDPGRELWDGPRSGTDGAIALTGVDDAYPLEEFQHLLPKLRAETNMVWYDWMKPSHAQLHSDYMQPLTEAKATSKNKVRSVQHLIQHLRLIKSPAEIKRMQIAGKLTSEAFIETMFASKAPVDEAFLYAKFEFECRARGADILAYPPVVAGGNRSNTLHYVKNNQLIKDGEMVLLDGGCESSCYVSDITRTWPVNGRFTAPQAELYEAVLEIQKACLTLCSPGTSLENIYSMMLTLMGQKLKDLGIIKTSKESAFKAARKYCPHHVGHYLGMDVHDTPDMPRSLPLQPGMVITVEPGIYIPEGDTDAPEKFRGLGVRIEDDVVVTQDSPLILSADCPKEVNDIEQICSRTS.

A mitochondrion-targeting transit peptide spans Met1–Tyr31. The segment at His54–Leu79 is interaction with TNFRSF1B. Residues Tyr300, Asp331, Asp342, His423, His430, Glu450, and Glu474 each coordinate substrate. Positions 331, 342, and 423 each coordinate Mn(2+). Glu450 and Glu474 together coordinate Mn(2+).

The protein belongs to the peptidase M24B family. In terms of assembly, homodimer. Interacts with TNFRSF1B/TNFR2 (activated) and TRAF2. It depends on Mn(2+) as a cofactor. Expressed in the kidney, specifically in intercalated cells, but not in principal cells, of the distal convoluted tubule and cortical collecting duct (at protein level).

Its subcellular location is the mitochondrion. It is found in the cytoplasm. It catalyses the reaction Release of any N-terminal amino acid, including proline, that is linked to proline, even from a dipeptide or tripeptide.. In terms of biological role, catalyzes the removal of a penultimate prolyl residue from the N-termini of peptides, such as Leu-Pro-Ala. Also shows low activity towards peptides with Ala or Ser at the P1 position. Promotes TNFRSF1B-mediated phosphorylation of MAPK8/JNK1 and MAPK9/JNK2, suggesting a function as an adapter protein for TNFRSF1B; the effect is independent of XPNPEP3 peptidase activity. May inhibit apoptotic cell death induced via TNF-TNFRSF1B signaling. The protein is Xaa-Pro aminopeptidase 3 (Xpnpep3) of Rattus norvegicus (Rat).